Here is a 353-residue protein sequence, read N- to C-terminus: O-antigen chain mannosyltransferase RfbU (353 aa).

The protein belongs to the glycosyltransferase group 1 family. Glycosyltransferase 4 subfamily.

The catalysed reaction is alpha-L-rhamnosyl-(1-&gt;3)-alpha-D-galactosyl-1-diphospho-di-trans,octa-cis-undecaprenol + GDP-alpha-D-mannose = alpha-D-Man-(1-&gt;4)-alpha-L-Rha-(1-&gt;3)-alpha-D-Gal-di-trans,octa-cis-undecaprenyl diphosphate + GDP + H(+). Its pathway is bacterial outer membrane biogenesis; LPS O-antigen biosynthesis. Mannosyltransferase involved in the biosynthesis of the repeat unit of the lipopolysaccharide (LPS) O-antigen region. Catalyzes the addition of a mannose to the rhamnosyl-galactosyl-undecaprenyl diphosphate intermediate. The polypeptide is O-antigen chain mannosyltransferase RfbU (Salmonella typhimurium (strain LT2 / SGSC1412 / ATCC 700720)).